An 834-amino-acid chain; its full sequence is Glycerol-3-phosphate acyltransferase (834 aa).

The short motif at 309 to 314 (CHRSHI) is the HXXXXD motif element.

It belongs to the GPAT/DAPAT family.

It localises to the cell inner membrane. The catalysed reaction is sn-glycerol 3-phosphate + an acyl-CoA = a 1-acyl-sn-glycero-3-phosphate + CoA. Its pathway is phospholipid metabolism; CDP-diacylglycerol biosynthesis; CDP-diacylglycerol from sn-glycerol 3-phosphate: step 1/3. This Pseudomonas aeruginosa (strain LESB58) protein is Glycerol-3-phosphate acyltransferase.